The following is a 119-amino-acid chain: Large ribosomal subunit protein bL20 (119 aa).

The protein belongs to the bacterial ribosomal protein bL20 family.

Functionally, binds directly to 23S ribosomal RNA and is necessary for the in vitro assembly process of the 50S ribosomal subunit. It is not involved in the protein synthesizing functions of that subunit. In Stenotrophomonas maltophilia (strain K279a), this protein is Large ribosomal subunit protein bL20.